Consider the following 202-residue polypeptide: FMN-dependent NADH:quinone oxidoreductase (202 aa).

Residues Ser10 and 95–98 (MYNF) each bind FMN.

This sequence belongs to the azoreductase type 1 family. In terms of assembly, homodimer. FMN serves as cofactor.

It carries out the reaction 2 a quinone + NADH + H(+) = 2 a 1,4-benzosemiquinone + NAD(+). The enzyme catalyses N,N-dimethyl-1,4-phenylenediamine + anthranilate + 2 NAD(+) = 2-(4-dimethylaminophenyl)diazenylbenzoate + 2 NADH + 2 H(+). Functionally, quinone reductase that provides resistance to thiol-specific stress caused by electrophilic quinones. In terms of biological role, also exhibits azoreductase activity. Catalyzes the reductive cleavage of the azo bond in aromatic azo compounds to the corresponding amines. The sequence is that of FMN-dependent NADH:quinone oxidoreductase from Alkalilimnicola ehrlichii (strain ATCC BAA-1101 / DSM 17681 / MLHE-1).